A 232-amino-acid chain; its full sequence is Large ribosomal subunit protein uL1 (232 aa).

The protein belongs to the universal ribosomal protein uL1 family. As to quaternary structure, part of the 50S ribosomal subunit.

In terms of biological role, binds directly to 23S rRNA. The L1 stalk is quite mobile in the ribosome, and is involved in E site tRNA release. Its function is as follows. Protein L1 is also a translational repressor protein, it controls the translation of the L11 operon by binding to its mRNA. The protein is Large ribosomal subunit protein uL1 of Stenotrophomonas maltophilia (strain R551-3).